The sequence spans 956 residues: Cytolysin RtxA (956 aa).

Residues 48 to 58 (LTIPKDYDIEK) are cholesterol recognition/amino acid consensus (CRAC) region 1. Cholesterol recognition/amino acid consensus (CARC) region regions lie at residues 280-287 (KAISSYVL) and 340-348 (KFGYDGDSL). A cholesterol recognition/amino acid consensus (CRAC) region 2 region spans residues 349 to 354 (LAEYQR). The segment at 444 to 453 (RHAHYLERNL) is cholesterol recognition/amino acid consensus (CARC) region 3. Lys-558 carries the N6-myristoyl lysine lipid modification. A Hemolysin-type calcium-binding 1 repeat occupies 613–639 (VNAGSGNDDIFAGQGKMNVDGGTGHDR). Lys-689 carries N6-myristoyl lysine lipidation. Hemolysin-type calcium-binding repeat units follow at residues 722–756 (GSQF…DDRL) and 757–791 (FGGN…GNDV).

It belongs to the RTX prokaryotic toxin (TC 1.C.11) family. Post-translationally, myristoylated by RtxC; the toxin only becomes active when modified. Mainly myristoylated; a very minor fraction is acylated with hydroxymyristoyl, lauroyl and palmitoleyl chains fatty acyl groups. Fatty acylation is involved in binding to host membranes and promotes the irreversible insertion of RtxA into the host cell membrane.

The protein resides in the secreted. The protein localises to the host cell membrane. Bacterial cytolysin that attacks host cell membranes and causes cell rupture by forming a pore. Binds and permeabilizes target cells by forming cation-selective pores. Constitutes the key virulence cytotoxin of K.kingae. Binds cholesterol and oligosaccharides on the surface of host cells. Does not bind beta-2 integrin (ITGB2) on the host cell surface. This is Cytolysin RtxA from Kingella kingae.